A 705-amino-acid chain; its full sequence is Choline transporter-like protein 2 (705 aa).

Over 1–33 the chain is Cytoplasmic; it reads MGKDSQHYYGKHGTPQKYDPTFKGPIYNRGCTD. Position 14 is a phosphothreonine (Thr-14). A helical transmembrane segment spans residues 34-54; sequence IICCVLLFLAIVGYVAVGIIA. The Extracellular portion of the chain corresponds to 55–232; sequence WTHGDPRKVI…QIFEDYTVSW (178 aa). N-linked (GlcNAc...) asparagine glycans are attached at residues Asn-187 and Asn-200. A helical transmembrane segment spans residues 233–253; the sequence is YWIVIGLVIAMLLSLMFIVLL. At 254–256 the chain is on the cytoplasmic side; the sequence is RFL. The helical transmembrane segment at 257-277 threads the bilayer; it reads AGVMVWVMIVMVILVLGYGIF. Residues 278–315 are Extracellular-facing; sequence HCYAEYSRLRGEAGSDVSLVDLGFQTDLRVYLHLRQTW. The chain crosses the membrane as a helical span at residues 316 to 336; it reads MAFMIILSILEVVIILLLIFL. Residues 337–364 are Cytoplasmic-facing; it reads RKRILIAIALIKEASRAVGHVMCSMLYP. Residues 365–385 form a helical membrane-spanning segment; it reads LVTFFLLCLCIAYWASTSVFL. Residues 386–453 lie on the Extracellular side of the membrane; the sequence is STSNVAVYKI…LQIFNAFMFF (68 aa). An N-linked (GlcNAc...) asparagine glycan is attached at Asn-416. Residues 454–476 traverse the membrane as a helical segment; sequence WLANFVLALGQVTLAGAFASYYW. Topologically, residues 477 to 503 are cytoplasmic; it reads AMRKPDDMPAFPLFSAFGRALRYHTGS. The chain crosses the membrane as a helical span at residues 504 to 524; sequence LAFGSLILAIVQIIRVMLEYL. Residues 525-562 lie on the Extracellular side of the membrane; the sequence is DQRLKAAQNKFAKFLMVCLKCCFWCLEKFIKFLNRNAY. The helical transmembrane segment at 563 to 583 threads the bilayer; sequence IMIAIYGTNFCTSARNAFFLL. Residues 584 to 598 are Cytoplasmic-facing; it reads MRNIIRVAVLDKVTD. The chain crosses the membrane as a helical span at residues 599–619; it reads FLFLLGKLLIVGSVGILAFFF. At 620–637 the chain is on the extracellular side; it reads FTHRIRIVQDTAPPLNYY. Residues 638–658 traverse the membrane as a helical segment; that stretch reads WVPILTVIIGSYLIAHGFFSV. Residues 659 to 705 are Cytoplasmic-facing; sequence YGMCVDTLFLCFLEDLERNDGSAERPYFMSSTLKKLLNKTNKKVAES.

This sequence belongs to the CTL (choline transporter-like) family. In terms of assembly, interacts with COCH. In terms of processing, N-glycosylated.

The protein localises to the cell membrane. Its subcellular location is the mitochondrion outer membrane. The enzyme catalyses choline(out) + n H(+)(in) = choline(in) + n H(+)(out). It catalyses the reaction ethanolamine(out) + n H(+)(in) = ethanolamine(in) + n H(+)(out). Its function is as follows. Exhibits choline transporter activity, as choline/H+ antiporter. Also acts as a low-affinity ethanolamine/H+ antiporter, regulating the supply of extracellular ethanolamine (Etn) for the CDP-Etn pathway, redistribute intracellular Etn and balance the CDP-Cho and CDP-Etn arms of the Kennedy pathway. The protein is Choline transporter-like protein 2 (Slc44a2) of Rattus norvegicus (Rat).